A 202-amino-acid chain; its full sequence is Small ribosomal subunit protein uS4 (202 aa).

Residues 22–43 (TRKSARRAYPPGQHGQNRKKRS) are disordered. The S4 RNA-binding domain occupies 90 to 152 (MRLDNTVFRL…APSRKLVENN (63 aa)).

This sequence belongs to the universal ribosomal protein uS4 family. In terms of assembly, part of the 30S ribosomal subunit. Contacts protein S5. The interaction surface between S4 and S5 is involved in control of translational fidelity.

In terms of biological role, one of the primary rRNA binding proteins, it binds directly to 16S rRNA where it nucleates assembly of the body of the 30S subunit. With S5 and S12 plays an important role in translational accuracy. In Trichormus variabilis (strain ATCC 29413 / PCC 7937) (Anabaena variabilis), this protein is Small ribosomal subunit protein uS4.